The following is a 186-amino-acid chain: Adenylyl-sulfate kinase (186 aa).

ATP is bound at residue 17–24 (GLSGAGKT). Ser91 (phosphoserine intermediate) is an active-site residue.

It belongs to the APS kinase family.

It carries out the reaction adenosine 5'-phosphosulfate + ATP = 3'-phosphoadenylyl sulfate + ADP + H(+). It functions in the pathway sulfur metabolism; hydrogen sulfide biosynthesis; sulfite from sulfate: step 2/3. In terms of biological role, catalyzes the synthesis of activated sulfate. In Chloroflexus aurantiacus (strain ATCC 29364 / DSM 637 / Y-400-fl), this protein is Adenylyl-sulfate kinase.